The following is a 699-amino-acid chain: Long-chain-fatty-acid--CoA ligase 1 (699 aa).

M1 bears the N-acetylmethionine mark. Y9 is modified (3'-nitrotyrosine). The chain crosses the membrane as a helical; Signal-anchor for type III membrane protein span at residues 25 to 45 (LPTNTLMGFGAFAALTTFWYA). The Cytoplasmic portion of the chain corresponds to 46-699 (TRPKALKPPC…IDELYATIKI (654 aa)). Y85 is subject to Phosphotyrosine. A 3'-nitrotyrosine modification is found at Y86. S136 carries O-linked (GlcNAc) serine glycosylation. An N6-acetyllysine mark is found at K208, K357, and K387. S621 carries the post-translational modification Phosphoserine. K633 is modified (N6-acetyllysine).

This sequence belongs to the ATP-dependent AMP-binding enzyme family. Requires Mg(2+) as cofactor.

It localises to the mitochondrion outer membrane. It is found in the peroxisome membrane. The protein localises to the microsome membrane. Its subcellular location is the endoplasmic reticulum membrane. The catalysed reaction is a long-chain fatty acid + ATP + CoA = a long-chain fatty acyl-CoA + AMP + diphosphate. The enzyme catalyses (5Z,8Z,11Z,14Z)-eicosatetraenoate + ATP + CoA = (5Z,8Z,11Z,14Z)-eicosatetraenoyl-CoA + AMP + diphosphate. It carries out the reaction 3,7,11,15-tetramethylhexadecanoate + ATP + CoA = phytanoyl-CoA + AMP + diphosphate. It catalyses the reaction hexadecanoate + ATP + CoA = hexadecanoyl-CoA + AMP + diphosphate. The catalysed reaction is (E)-hexadec-2-enoate + ATP + CoA = (2E)-hexadecenoyl-CoA + AMP + diphosphate. The enzyme catalyses 2,6,10,14-tetramethylpentadecanoate + ATP + CoA = pristanoyl-CoA + AMP + diphosphate. It carries out the reaction 14,15-epoxy-(5Z,8Z,11Z)-eicosatrienoate + ATP + CoA = 14,15-epoxy-(5Z,8Z,11Z)-eicosatrienoyl-CoA + AMP + diphosphate. It catalyses the reaction 5-hydroxy-(6E,8Z,11Z,14Z)-eicosatetraenoate + ATP + CoA = 5-hydroxy-(6E,8Z,11Z,14Z)-eicosatetraenoyl-CoA + AMP + diphosphate. The catalysed reaction is 12-hydroxy-(5Z,8Z,10E,14Z)-eicosatetraenoate + ATP + CoA = 12-hydroxy-(5Z,8Z,10E,14Z)-eicosatetraenoyl-CoA + AMP + diphosphate. The enzyme catalyses 15-hydroxy-(5Z,8Z,11Z,13E)-eicosatetraenoate + ATP + CoA = 15-hydroxy-(5Z,8Z,11Z,13E)-eicosatetraenoyl-CoA + AMP + diphosphate. It carries out the reaction (9Z)-octadecenoate + ATP + CoA = (9Z)-octadecenoyl-CoA + AMP + diphosphate. Its activity is regulated as follows. Inhibited at high temperature and by arachidonate. Its function is as follows. Catalyzes the conversion of long-chain fatty acids to their active form acyl-CoAs for both synthesis of cellular lipids, and degradation via beta-oxidation. Preferentially uses palmitoleate, oleate and linoleate. Preferentially activates arachidonate than epoxyeicosatrienoic acids (EETs) or hydroxyeicosatrienoic acids (HETEs). This chain is Long-chain-fatty-acid--CoA ligase 1, found in Mus musculus (Mouse).